Consider the following 99-residue polypeptide: uncharacterized protein (99 aa).

This is an uncharacterized protein from Thermoproteus tenax virus 1 (strain KRA1) (TTV1).